The sequence spans 1418 residues: Transcriptional regulator ADR1 (1418 aa).

Composition is skewed to low complexity over residues 34 to 44 and 68 to 93; these read TTTTANMSNTT and TSMSPSNSINSTNNNAAAAAATTTTS. A disordered region spans residues 34–96; that stretch reads TTTTANMSNT…AATTTTSKKS (63 aa). 2 consecutive C2H2-type zinc fingers follow at residues 117–139 and 145–168; these read FVCQVCTRAFARLEHLRRHERSH and FSCGVCQRKFSRRDLLLRHAQKLH. Disordered regions lie at residues 181-285, 403-426, 454-484, 1132-1167, and 1338-1362; these read KSIK…LDQR, SQHGSFSHQSTFSATDMGQTRSES, VAAHHHHQQQQQHQQHNHQHQPNQSSLGLSR, NSNSRNRSKNDPTNEINNKLNNNNNNNNDMNNNNSN, and TNTNTTNTITTTTTTDNGTKQNQHH. Acidic residues predominate over residues 189–211; it reads GDDDDDDDDDDEEMANSEDENDH. The span at 236 to 278 shows a compositional bias: polar residues; the sequence is NLFNSKQKPTKANTTKSKVAKLSTTTSRKNSTNPTRKNSSSLH. 3 stretches are compositionally biased toward low complexity: residues 462–477, 1145–1167, and 1338–1356; these read QQQQHQQHNHQHQPNQ, NEINNKLNNNNNNNNDMNNNNSN, and TNTNTTNTITTTTTTDNGT.

Its subcellular location is the nucleus. Transcription factor involved in the regulation of hyphal growth. The chain is Transcriptional regulator ADR1 (ADR1) from Candida albicans (strain SC5314 / ATCC MYA-2876) (Yeast).